The chain runs to 242 residues: Probable transcriptional regulatory protein BamMC406_2210 (242 aa).

It belongs to the TACO1 family.

It is found in the cytoplasm. This chain is Probable transcriptional regulatory protein BamMC406_2210, found in Burkholderia ambifaria (strain MC40-6).